The primary structure comprises 72 residues: Cell division protein ZapB (72 aa).

A coiled-coil region spans residues 1–72 (MSSEILDQLE…RSLLGQIDNV (72 aa)).

It belongs to the ZapB family. In terms of assembly, homodimer. The ends of the coiled-coil dimer bind to each other, forming polymers. Interacts with FtsZ.

The protein resides in the cytoplasm. Its function is as follows. Non-essential, abundant cell division factor that is required for proper Z-ring formation. It is recruited early to the divisome by direct interaction with FtsZ, stimulating Z-ring assembly and thereby promoting cell division earlier in the cell cycle. Its recruitment to the Z-ring requires functional FtsA or ZipA. In Actinobacillus succinogenes (strain ATCC 55618 / DSM 22257 / CCUG 43843 / 130Z), this protein is Cell division protein ZapB.